The chain runs to 402 residues: Diaminopimelate decarboxylase (402 aa).

Lys-61 carries the N6-(pyridoxal phosphate)lysine modification. Pyridoxal 5'-phosphate-binding positions include Gly-233 and 269 to 272; that span reads EPGR. Substrate contacts are provided by Arg-272, Arg-304, Tyr-308, Glu-334, and Tyr-360. Residue Tyr-360 coordinates pyridoxal 5'-phosphate.

It belongs to the Orn/Lys/Arg decarboxylase class-II family. LysA subfamily. Homodimer. Pyridoxal 5'-phosphate is required as a cofactor.

It carries out the reaction meso-2,6-diaminopimelate + H(+) = L-lysine + CO2. It participates in amino-acid biosynthesis; L-lysine biosynthesis via DAP pathway; L-lysine from DL-2,6-diaminopimelate: step 1/1. In terms of biological role, specifically catalyzes the decarboxylation of meso-diaminopimelate (meso-DAP) to L-lysine. This is Diaminopimelate decarboxylase from Thermoplasma acidophilum (strain ATCC 25905 / DSM 1728 / JCM 9062 / NBRC 15155 / AMRC-C165).